The primary structure comprises 444 residues: Zinc finger protein ZIC 1 (444 aa).

The segment at leucine 222–histidine 257 adopts a C2H2-type 1 zinc-finger fold. Residues glutamate 271 to histidine 293 form a C2H2-type 2; degenerate zinc finger. C2H2-type zinc fingers lie at residues phenylalanine 299 to histidine 323, phenylalanine 329 to histidine 353, and tyrosine 359 to histidine 381. Residues serine 372 to histidine 432 form a disordered region. The span at serine 383 to histidine 432 shows a compositional bias: low complexity.

It belongs to the GLI C2H2-type zinc-finger protein family.

The protein localises to the nucleus. Its subcellular location is the cytoplasm. Functionally, acts as a transcriptional activator. Involved in neurogenesis. Plays important roles in the early stage of organogenesis of the CNS, as well as during dorsal spinal cord development and maturation of the cerebellum. Binds to the minimal GLI-consensus sequence 5'-TGGGTGGTC-3'. The chain is Zinc finger protein ZIC 1 (ZIC1) from Gallus gallus (Chicken).